Here is a 213-residue protein sequence, read N- to C-terminus: Orotate phosphoribosyltransferase (213 aa).

Lysine 26 contributes to the 5-phospho-alpha-D-ribose 1-diphosphate binding site. An orotate-binding site is contributed by 34–35; it reads FF. Residues 72–73, arginine 99, lysine 100, lysine 103, histidine 105, and 124–132 contribute to the 5-phospho-alpha-D-ribose 1-diphosphate site; these read YK and DDVITAGTA. Residues threonine 128 and arginine 156 each coordinate orotate.

The protein belongs to the purine/pyrimidine phosphoribosyltransferase family. PyrE subfamily. As to quaternary structure, homodimer. The cofactor is Mg(2+).

The catalysed reaction is orotidine 5'-phosphate + diphosphate = orotate + 5-phospho-alpha-D-ribose 1-diphosphate. It participates in pyrimidine metabolism; UMP biosynthesis via de novo pathway; UMP from orotate: step 1/2. In terms of biological role, catalyzes the transfer of a ribosyl phosphate group from 5-phosphoribose 1-diphosphate to orotate, leading to the formation of orotidine monophosphate (OMP). In Vibrio parahaemolyticus serotype O3:K6 (strain RIMD 2210633), this protein is Orotate phosphoribosyltransferase.